A 481-amino-acid chain; its full sequence is Proline--tRNA ligase (481 aa).

Belongs to the class-II aminoacyl-tRNA synthetase family. ProS type 3 subfamily. As to quaternary structure, homodimer.

It is found in the cytoplasm. The enzyme catalyses tRNA(Pro) + L-proline + ATP = L-prolyl-tRNA(Pro) + AMP + diphosphate. In terms of biological role, catalyzes the attachment of proline to tRNA(Pro) in a two-step reaction: proline is first activated by ATP to form Pro-AMP and then transferred to the acceptor end of tRNA(Pro). This chain is Proline--tRNA ligase, found in Thermococcus kodakarensis (strain ATCC BAA-918 / JCM 12380 / KOD1) (Pyrococcus kodakaraensis (strain KOD1)).